A 184-amino-acid polypeptide reads, in one-letter code: MEGFFWKTWLVVAAFAIGGTSSLPHKPLTYEEAVDLAVSTYNGKSGEESLYRLLEAVPPPKWDPLSESNQELNLTIKETVCLVAEERSLEECDFQDDGAVMGCTGYFFFGESPPVLVLTCEPLGEDEEQNQEEEEEEEKEEDEKDQPRRVKRFKKFFMKLKKSVKKRVMKFFKKPMVIGVTFPF.

A signal peptide spans 1–22 (MEGFFWKTWLVVAAFAIGGTSS). A propeptide spanning residues 23 to 150 (LPHKPLTYEE…EDEKDQPRRV (128 aa)) is cleaved from the precursor. Disulfide bonds link Cys-81/Cys-92 and Cys-103/Cys-120. The segment covering 125–144 (EDEEQNQEEEEEEEKEEDEK) has biased composition (acidic residues). Residues 125–147 (EDEEQNQEEEEEEEKEEDEKDQP) form a disordered region.

The protein belongs to the cathelicidin family. In terms of tissue distribution, expressed by the venom gland.

It localises to the secreted. The protein localises to the target cell membrane. In terms of biological role, potent antimicrobial peptide against Gram-negative (MIC=2 ug/ml against E.coli ATCC 25922, MIC=8 ug/ml against P.aeruginosa) and Gram-positive bacteria (MIC=32 ug/ml against E.faecalis, MIC=32 ug/ml against S.aureus). Adopts an amphipathic alpha helical conformation, that may allow to partition into the target membrane. High hemolytic activities have been observed on mammalian cells. The protein is Cathelicidin-related peptide Pt_CRAMP1 of Pseudonaja textilis (Eastern brown snake).